A 374-amino-acid chain; its full sequence is S-adenosylmethionine:tRNA ribosyltransferase-isomerase (374 aa).

The protein belongs to the QueA family. Monomer.

It localises to the cytoplasm. The catalysed reaction is 7-aminomethyl-7-carbaguanosine(34) in tRNA + S-adenosyl-L-methionine = epoxyqueuosine(34) in tRNA + adenine + L-methionine + 2 H(+). The protein operates within tRNA modification; tRNA-queuosine biosynthesis. Its function is as follows. Transfers and isomerizes the ribose moiety from AdoMet to the 7-aminomethyl group of 7-deazaguanine (preQ1-tRNA) to give epoxyqueuosine (oQ-tRNA). In Prochlorococcus marinus (strain MIT 9215), this protein is S-adenosylmethionine:tRNA ribosyltransferase-isomerase.